The sequence spans 306 residues: uncharacterized protein (306 aa).

Positions 40–156 are disordered; it reads HETCSTPGED…AVASASAPTE (117 aa). Positions 64–73 are enriched in low complexity; the sequence is EGINLGEEGL. The span at 129 to 139 shows a compositional bias: basic residues; the sequence is KQHKKAKKRKS.

This is an uncharacterized protein from Rattus norvegicus (Rat).